A 111-amino-acid chain; its full sequence is MMKHYVMPIHTSNGATVCTPDGFAMKQRIERLKRELRINRKINKIGSGYDRTHDGLKKGYMPNGTLYAANRRIVRTWRENNLERRKDKRGRRGIDERKRLKPRNSPHLNRH.

The segment at 82-111 (LERRKDKRGRRGIDERKRLKPRNSPHLNRH) is disordered. Residues 99–111 (RLKPRNSPHLNRH) show a composition bias toward basic residues.

This is Protein 0.6B (0.6A) from Escherichia coli (Bacteriophage T7).